A 348-amino-acid chain; its full sequence is Protein RecA (348 aa).

Position 64 to 71 (64 to 71 (GPESSGKT)) interacts with ATP. The span at 326–335 (EIDGTNKEPL) shows a compositional bias: basic and acidic residues. Residues 326–348 (EIDGTNKEPLDENEETLSLLDDE) form a disordered region. The segment covering 336–348 (DENEETLSLLDDE) has biased composition (acidic residues).

Belongs to the RecA family.

It localises to the cytoplasm. Functionally, can catalyze the hydrolysis of ATP in the presence of single-stranded DNA, the ATP-dependent uptake of single-stranded DNA by duplex DNA, and the ATP-dependent hybridization of homologous single-stranded DNAs. It interacts with LexA causing its activation and leading to its autocatalytic cleavage. In Listeria innocua serovar 6a (strain ATCC BAA-680 / CLIP 11262), this protein is Protein RecA.